A 413-amino-acid chain; its full sequence is Peptidase T (413 aa).

His81 lines the Zn(2+) pocket. Asp83 is an active-site residue. Asp143 is a Zn(2+) binding site. Residue Glu178 is the Proton acceptor of the active site. The Zn(2+) site is built by Glu179, Asp201, and His383.

Belongs to the peptidase M20B family. Requires Zn(2+) as cofactor.

It is found in the cytoplasm. The enzyme catalyses Release of the N-terminal residue from a tripeptide.. In terms of biological role, cleaves the N-terminal amino acid of tripeptides. The polypeptide is Peptidase T (Lactococcus lactis subsp. hordniae).